A 119-amino-acid chain; its full sequence is Large ribosomal subunit protein bL20 (119 aa).

This sequence belongs to the bacterial ribosomal protein bL20 family.

Functionally, binds directly to 23S ribosomal RNA and is necessary for the in vitro assembly process of the 50S ribosomal subunit. It is not involved in the protein synthesizing functions of that subunit. This chain is Large ribosomal subunit protein bL20, found in Alkalilimnicola ehrlichii (strain ATCC BAA-1101 / DSM 17681 / MLHE-1).